A 94-amino-acid chain; its full sequence is Large ribosomal subunit protein bL27 (94 aa).

Positions 1–9 (MTLNNLQLF) are excised as a propeptide. The interval 9–33 (FAHKKGGGSTSNGRDSQAKRLGAKA) is disordered.

The protein belongs to the bacterial ribosomal protein bL27 family. In terms of processing, the N-terminus is cleaved by ribosomal processing cysteine protease Prp.

The chain is Large ribosomal subunit protein bL27 from Streptococcus pneumoniae serotype 4 (strain ATCC BAA-334 / TIGR4).